The sequence spans 212 residues: Pyridoxine/pyridoxamine 5'-phosphate oxidase (212 aa).

Residues 8–11 and Lys-66 contribute to the substrate site; that span reads RREY. FMN contacts are provided by residues 61–66, 76–77, Arg-82, Lys-83, and Gln-105; these read RIVLLK and FT. Substrate-binding residues include Tyr-123, Arg-127, and Ser-131. Residues 140–141 and Trp-185 each bind FMN; that span reads QS. A substrate-binding site is contributed by 191 to 193; the sequence is RLH. An FMN-binding site is contributed by Arg-195.

Belongs to the pyridoxamine 5'-phosphate oxidase family. As to quaternary structure, homodimer. The cofactor is FMN.

The enzyme catalyses pyridoxamine 5'-phosphate + O2 + H2O = pyridoxal 5'-phosphate + H2O2 + NH4(+). It carries out the reaction pyridoxine 5'-phosphate + O2 = pyridoxal 5'-phosphate + H2O2. Its pathway is cofactor metabolism; pyridoxal 5'-phosphate salvage; pyridoxal 5'-phosphate from pyridoxamine 5'-phosphate: step 1/1. It functions in the pathway cofactor metabolism; pyridoxal 5'-phosphate salvage; pyridoxal 5'-phosphate from pyridoxine 5'-phosphate: step 1/1. Functionally, catalyzes the oxidation of either pyridoxine 5'-phosphate (PNP) or pyridoxamine 5'-phosphate (PMP) into pyridoxal 5'-phosphate (PLP). The chain is Pyridoxine/pyridoxamine 5'-phosphate oxidase from Shewanella denitrificans (strain OS217 / ATCC BAA-1090 / DSM 15013).